A 469-amino-acid polypeptide reads, in one-letter code: Cysteine--tRNA ligase (469 aa).

C29 serves as a coordination point for Zn(2+). Residues 31 to 41 carry the 'HIGH' region motif; the sequence is PTVYNYIHIGN. C210, H235, and E239 together coordinate Zn(2+). A 'KMSKS' region motif is present at residues 267–271; that stretch reads KMSKS. Residue K270 coordinates ATP.

Belongs to the class-I aminoacyl-tRNA synthetase family. Monomer. Zn(2+) serves as cofactor.

The protein resides in the cytoplasm. The catalysed reaction is tRNA(Cys) + L-cysteine + ATP = L-cysteinyl-tRNA(Cys) + AMP + diphosphate. This is Cysteine--tRNA ligase from Thermosipho africanus (strain TCF52B).